The sequence spans 558 residues: Receptor-like kinase LIP2 (558 aa).

The tract at residues 1–45 is disordered; sequence MHCFPCFSSPKNKKSSTTNETNDNNEPKPDDRRRAEETEEIEQSE. A compositionally biased stretch (low complexity) spans 15–24; the sequence is SSTTNETNDN. Over residues 25–36 the composition is skewed to basic and acidic residues; that stretch reads NEPKPDDRRRAE. Thr-53 bears the Phosphothreonine mark. Positions 64-343 constitute a Protein kinase domain; sequence FRQECLLGEG…SDVMVALSFL (280 aa). ATP is bound by residues 70-78 and Lys-93; that span reads LGEGGFGRV. A Phosphotyrosine modification is found at Tyr-138. The Proton acceptor role is filled by Asp-191. Residues Ser-195 and Ser-227 each carry the phosphoserine modification. Thr-233 is subject to Phosphothreonine. The residue at position 241 (Tyr-241) is a Phosphotyrosine. The segment at 372–558 is disordered; that stretch reads HDSNLVSPPP…SDVAIDSIKE (187 aa). Over residues 401-418 the composition is skewed to basic and acidic residues; the sequence is ESEKESVSKNEYKKKHEE. The segment covering 419–431 has biased composition (acidic residues); that stretch reads EDSSMESDDESDS. Basic and acidic residues predominate over residues 432-448; it reads NSEHEKDQPPKPIDEKN. Residues 473–486 are compositionally biased toward low complexity; it reads SKSSQKSNDESTSS. Composition is skewed to basic and acidic residues over residues 488-500, 508-524, and 547-558; these read YDSDRDQDEKGKE, EEKHTHIEHIDSSKTDD, and IKSDVAIDSIKE.

Belongs to the protein kinase superfamily. Ser/Thr protein kinase family. As to quaternary structure, interacts with PRK6. Palmitoylated. As to expression, expressed in mature pollen and in germinating pollen tubes.

It localises to the cell membrane. In terms of biological role, involved in pollen tube guidance into micropyle. Participates in perception of the ovule-secreted peptide signal LURE1. The polypeptide is Receptor-like kinase LIP2 (Arabidopsis thaliana (Mouse-ear cress)).